Reading from the N-terminus, the 214-residue chain is Redox-sensing transcriptional repressor Rex (214 aa).

The H-T-H motif DNA-binding region spans 16–55 (LYYRYLIFLNDEGKEKVSSTELAEAVQVDSASIRRDFSYF). 90–95 (GVGNMG) contributes to the NAD(+) binding site.

The protein belongs to the transcriptional regulatory Rex family. In terms of assembly, homodimer.

The protein resides in the cytoplasm. Functionally, modulates transcription in response to changes in cellular NADH/NAD(+) redox state. The sequence is that of Redox-sensing transcriptional repressor Rex from Lactobacillus gasseri (strain ATCC 33323 / DSM 20243 / BCRC 14619 / CIP 102991 / JCM 1131 / KCTC 3163 / NCIMB 11718 / NCTC 13722 / AM63).